We begin with the raw amino-acid sequence, 237 residues long: Protein CUSTOS (237 aa).

Disordered regions lie at residues 1–23, 50–69, and 97–237; these read MAAP…LDRF, LRVR…TTPE, and ISKA…LGNE. The segment covering 52 to 62 has biased composition (basic and acidic residues); the sequence is VRPDCHEHDGN. Polar residues predominate over residues 162 to 177; sequence STLQQEPQSTPSNVCD. A compositionally biased stretch (basic residues) spans 181–190; that stretch reads PKKKRKKKKK. A Nucleolar localization signal (NLS1) motif is present at residues 182–190; the sequence is KKKRKKKKK. Composition is skewed to basic and acidic residues over residues 203–216 and 225–237; these read ETMH…ELQA and KLEM…LGNE. A Nucleolar localization signal (NLS2) motif is present at residues 217 to 225; sequence KRKKKKKQK.

It belongs to the CUSTOS family. As to quaternary structure, interacts (via NLS1 and NLS2) with dvl2; the interaction is negatively regulated by Wnt stimulation. Interacts with csnk1a1. Interacts with ctnnb1; the interaction is positively regulated by Wnt stimulation. Post-translationally, phosphorylated by ck1/csnk1a1.

It localises to the nucleus envelope. In terms of biological role, essential for Spemann-Mangold organizer formation and subsequent anterior head development in the embryo. Inhibits canonical Wnt signaling pathway by antagonizing nuclear import of beta-catenin (ctnnb1) during embryogenesis. This is Protein CUSTOS from Xenopus laevis (African clawed frog).